The sequence spans 515 residues: Protein disulfide-isomerase (515 aa).

A signal peptide spans 1 to 22 (MAVVRVRAIVALLCLVAALGLA). Thioredoxin domains are found at residues 23–139 (EPLE…KRTG) and 351–480 (FLEG…SGGQ). Catalysis depends on nucleophile residues cysteine 58, cysteine 61, cysteine 402, and cysteine 405. Disulfide bonds link cysteine 58–cysteine 61 and cysteine 402–cysteine 405. The interval 477 to 515 (SGGQDGAAADDDLEDLETDEETDLEEGDDDEQKIQKDEL) is disordered. Over residues 484 to 507 (AADDDLEDLETDEETDLEEGDDDE) the composition is skewed to acidic residues. A Prevents secretion from ER motif is present at residues 512–515 (KDEL).

It belongs to the protein disulfide isomerase family. Heterodimer; heterodimerizes with the protein microsomal triglyceride transfer MTTP. Homodimer. Monomers and homotetramers may also occur. Also constitutes the structural subunit of prolyl 4-hydroxylase. Stabilizes this enzyme and retains it in the ER without contributing to the catalytic activity. Binds UBQLN1.

It localises to the endoplasmic reticulum. The protein resides in the endoplasmic reticulum lumen. Its subcellular location is the cell membrane. The catalysed reaction is Catalyzes the rearrangement of -S-S- bonds in proteins.. Functionally, this multifunctional protein catalyzes the formation, breakage and rearrangement of disulfide bonds. At the cell surface, seems to act as a reductase that cleaves disulfide bonds of proteins attached to the cell. May therefore cause structural modifications of exofacial proteins. Inside the cell, seems to form/rearrange disulfide bonds of nascent proteins. At high concentrations, functions as a chaperone that inhibits aggregation of misfolded proteins. At low concentrations, facilitates aggregation (anti-chaperone activity). Also acts a structural subunit of various enzymes such as prolyl 4-hydroxylase. The sequence is that of Protein disulfide-isomerase (P4HB) from Gallus gallus (Chicken).